The primary structure comprises 234 residues: Protein UL20 homolog (234 aa).

4 helical membrane-spanning segments follow: residues 82 to 102 (VVLFGLSTFVLRPSCCLIFLF), 112 to 132 (FLILGTTITAFFYGTLMLEMY), 153 to 173 (IGALSMLGPIIFVAISYNMIF), and 191 to 211 (TSGFVIYLVMIASLAYSITSI).

The protein belongs to the alphaherpesvirinae UL20 family. Interacts with gK (via N-terminus); this interaction plays a role in the coordinate transport of UL20 and gK to the trans-Golgi network (TGN), and is required for their cell surface expression. Interacts with gB.

The protein localises to the virion. Its subcellular location is the host cell membrane. It is found in the host endosome membrane. The protein resides in the host Golgi apparatus membrane. It localises to the host nucleus membrane. Plays an essential role in egress of virus particles from the nucleus, cytoplasmic envelopment and virus-induced cell fusion. Forms a functional protein complex with gK and this interaction is absolutely essential for their coordinate intracellular transport, gK glycosylation, expression on host cell surface, and function. Together, they modulate gB-mediated virus-induced cell fusion and virion egress and therefore actively participate in these processes. This is Protein UL20 homolog (MDV032) from Gallid herpesvirus 2 (strain Chicken/Md5/ATCC VR-987) (GaHV-2).